The chain runs to 207 residues: Phosphoenolpyruvate guanylyltransferase (207 aa).

Threonine 137, glycine 153, and serine 156 together coordinate phosphoenolpyruvate.

This sequence belongs to the CofC family.

The enzyme catalyses phosphoenolpyruvate + GTP + H(+) = enolpyruvoyl-2-diphospho-5'-guanosine + diphosphate. Its pathway is cofactor biosynthesis; coenzyme F420 biosynthesis. Its function is as follows. Guanylyltransferase that catalyzes the activation of phosphoenolpyruvate (PEP) as enolpyruvoyl-2-diphospho-5'-guanosine, via the condensation of PEP with GTP. It is involved in the biosynthesis of coenzyme F420, a hydride carrier cofactor. The sequence is that of Phosphoenolpyruvate guanylyltransferase from Sphaerobacter thermophilus (strain ATCC 49802 / DSM 20745 / KCCM 41009 / NCIMB 13125 / S 6022).